The following is a 197-amino-acid chain: Transposon Tn10 TetC protein (197 aa).

The HTH tetR-type domain maps to 12-72; sequence KSTYQSLVNS…ACYKQQLIMI (61 aa). Residues 35-54 constitute a DNA-binding region (H-T-H motif); the sequence is SIDEISGKALVTKGAFYHHF.

This is Transposon Tn10 TetC protein (tetC) from Escherichia coli.